Consider the following 289-residue polypeptide: Ribosomal RNA small subunit methyltransferase A (289 aa).

Residues asparagine 28, leucine 30, glycine 55, glutamate 77, aspartate 103, and asparagine 122 each contribute to the S-adenosyl-L-methionine site.

The protein belongs to the class I-like SAM-binding methyltransferase superfamily. rRNA adenine N(6)-methyltransferase family. RsmA subfamily.

The protein resides in the cytoplasm. It catalyses the reaction adenosine(1518)/adenosine(1519) in 16S rRNA + 4 S-adenosyl-L-methionine = N(6)-dimethyladenosine(1518)/N(6)-dimethyladenosine(1519) in 16S rRNA + 4 S-adenosyl-L-homocysteine + 4 H(+). In terms of biological role, specifically dimethylates two adjacent adenosines (A1518 and A1519) in the loop of a conserved hairpin near the 3'-end of 16S rRNA in the 30S particle. May play a critical role in biogenesis of 30S subunits. This Jannaschia sp. (strain CCS1) protein is Ribosomal RNA small subunit methyltransferase A.